Reading from the N-terminus, the 93-residue chain is Small ribosomal subunit protein bS18c (93 aa).

The protein belongs to the bacterial ribosomal protein bS18 family. In terms of assembly, part of the 30S ribosomal subunit.

The protein localises to the plastid. Its subcellular location is the chloroplast. In Pinus koraiensis (Korean pine), this protein is Small ribosomal subunit protein bS18c.